A 404-amino-acid chain; its full sequence is Cysteine desulfurase IscS (404 aa).

Pyridoxal 5'-phosphate is bound by residues 75-76 (AT), N155, Q183, and 203-205 (SAH). K206 is modified (N6-(pyridoxal phosphate)lysine). T243 serves as a coordination point for pyridoxal 5'-phosphate. The active-site Cysteine persulfide intermediate is C328. [2Fe-2S] cluster is bound at residue C328.

It belongs to the class-V pyridoxal-phosphate-dependent aminotransferase family. NifS/IscS subfamily. Homodimer. Forms a heterotetramer with IscU, interacts with other sulfur acceptors. Pyridoxal 5'-phosphate serves as cofactor.

The protein resides in the cytoplasm. The catalysed reaction is (sulfur carrier)-H + L-cysteine = (sulfur carrier)-SH + L-alanine. The protein operates within cofactor biosynthesis; iron-sulfur cluster biosynthesis. In terms of biological role, master enzyme that delivers sulfur to a number of partners involved in Fe-S cluster assembly, tRNA modification or cofactor biosynthesis. Catalyzes the removal of elemental sulfur atoms from cysteine to produce alanine. Functions as a sulfur delivery protein for Fe-S cluster synthesis onto IscU, an Fe-S scaffold assembly protein, as well as other S acceptor proteins. This chain is Cysteine desulfurase IscS, found in Stutzerimonas stutzeri (strain A1501) (Pseudomonas stutzeri).